Here is a 371-residue protein sequence, read N- to C-terminus: Cytochrome b (371 aa).

The next 4 membrane-spanning stretches (helical) occupy residues Phe25–Ile45, Trp69–Ile90, Trp105–Leu125, and Phe170–Ile190. Heme b-binding residues include His75 and His89. His174 and His188 together coordinate heme b. An a ubiquinone-binding site is contributed by His193. 4 consecutive transmembrane segments (helical) span residues His218–Leu238, Leu280–His300, Leu312–Thr332, and Phe339–Pro358.

The protein belongs to the cytochrome b family. In terms of assembly, the cytochrome bc1 complex contains 3 respiratory subunits (MT-CYB, CYC1 and UQCRFS1), 2 core proteins (UQCRC1 and UQCRC2) and probably 6 low-molecular weight proteins. Requires heme b as cofactor.

The protein resides in the mitochondrion inner membrane. In terms of biological role, component of the ubiquinol-cytochrome c reductase complex (complex III or cytochrome b-c1 complex) that is part of the mitochondrial respiratory chain. The b-c1 complex mediates electron transfer from ubiquinol to cytochrome c. Contributes to the generation of a proton gradient across the mitochondrial membrane that is then used for ATP synthesis. The sequence is that of Cytochrome b (MT-CYB) from Antaresia maculosa (Eastern small blotched python).